The sequence spans 337 residues: S-adenosylmethionine:tRNA ribosyltransferase-isomerase (337 aa).

The protein belongs to the QueA family. As to quaternary structure, monomer.

The protein resides in the cytoplasm. The catalysed reaction is 7-aminomethyl-7-carbaguanosine(34) in tRNA + S-adenosyl-L-methionine = epoxyqueuosine(34) in tRNA + adenine + L-methionine + 2 H(+). Its pathway is tRNA modification; tRNA-queuosine biosynthesis. Functionally, transfers and isomerizes the ribose moiety from AdoMet to the 7-aminomethyl group of 7-deazaguanine (preQ1-tRNA) to give epoxyqueuosine (oQ-tRNA). The chain is S-adenosylmethionine:tRNA ribosyltransferase-isomerase from Legionella pneumophila (strain Paris).